The chain runs to 295 residues: Tyrosine recombinase XerC (295 aa).

One can recognise a Core-binding (CB) domain in the interval 1-85; sequence MLTALNRYWD…ALRRFLSFLV (85 aa). Positions 106–285 constitute a Tyr recombinase domain; it reads HLPKNMDGEQ…NFQHLAEVYD (180 aa). Catalysis depends on residues Arg-145, Lys-169, His-237, Arg-240, and His-263. The O-(3'-phospho-DNA)-tyrosine intermediate role is filled by Tyr-272.

This sequence belongs to the 'phage' integrase family. XerC subfamily. Forms a cyclic heterotetrameric complex composed of two molecules of XerC and two molecules of XerD.

It is found in the cytoplasm. Site-specific tyrosine recombinase, which acts by catalyzing the cutting and rejoining of the recombining DNA molecules. The XerC-XerD complex is essential to convert dimers of the bacterial chromosome into monomers to permit their segregation at cell division. It also contributes to the segregational stability of plasmids. The protein is Tyrosine recombinase XerC of Haemophilus influenzae (strain 86-028NP).